Reading from the N-terminus, the 296-residue chain is Probable lipid kinase YegS-like (296 aa).

Residues 1–130 enclose the DAGKc domain; it reads MPHTLLILNG…IDLAQVNGEH (130 aa). ATP-binding positions include Thr37, 63 to 69, and Thr92; that span reads GDGTINE. Mg(2+) contacts are provided by Leu212, Asp215, and Leu217. Glu268 acts as the Proton acceptor in catalysis.

It belongs to the diacylglycerol/lipid kinase family. YegS lipid kinase subfamily. The cofactor is Mg(2+). Requires Ca(2+) as cofactor.

It is found in the cytoplasm. Functionally, probably phosphorylates lipids; the in vivo substrate is unknown. This is Probable lipid kinase YegS-like from Yersinia pestis bv. Antiqua (strain Angola).